We begin with the raw amino-acid sequence, 72 residues long: UPF0154 protein BPUM_1692 (72 aa).

Residues 4–24 (WVVILVGVVALLAGVALGFFI) form a helical membrane-spanning segment.

Belongs to the UPF0154 family.

The protein localises to the cell membrane. The sequence is that of UPF0154 protein BPUM_1692 from Bacillus pumilus (strain SAFR-032).